The chain runs to 1097 residues: Leukemia inhibitory factor receptor (1097 aa).

Residues 1–44 form the signal peptide; sequence MMNISLRLRRPPWMVDSNGRRMTSHFQWLLLTFILLYLMNQVTS. The Extracellular portion of the chain corresponds to 45–833; the sequence is EKRGAPRDLK…SMFVVTKENS (789 aa). A Fibronectin type-III 1 domain is found at 46-131; the sequence is KRGAPRDLKC…ISKFTLNEKN (86 aa). Intrachain disulfides connect C55–C65 and C82–C90. N85, N131, N143, N191, N243, and N303 each carry an N-linked (GlcNAc...) asparagine glycan. C213 and C270 are joined by a disulfide. 5 Fibronectin type-III domains span residues 332–434, 435–534, 538–629, 627–719, and 724–833; these read PPDI…VYPR, IPTS…TEAI, GPDT…IPND, PNDD…IGYI, and PIVA…KENS. C341 and C351 are disulfide-bonded. N-linked (GlcNAc...) asparagine glycans are attached at residues N366, N390, N407, N426, N445, N471, N481, and N489. Residues C466 and C511 are joined by a disulfide bond. Positions 519–523 match the WSXWS motif motif; sequence WSKWS. Residues N572, N652, N663, N680, N729, and N787 are each glycosylated (N-linked (GlcNAc...) asparagine). Residues 834–854 form a helical membrane-spanning segment; the sequence is VGLIIAILIPVAVAVIVGVVT. The Cytoplasmic segment spans residues 855–1097; the sequence is SILCYRKREW…TNFFQNKPND (243 aa). The short motif at 869–877 is the Box 1 motif element; that stretch reads FYPDIPNPE. S927 carries the phosphoserine modification. Disordered regions lie at residues 982 to 1005 and 1022 to 1097; these read QPQAKPEEEQENDPVGGAGYKPQM and LDKA…KPND. Composition is skewed to polar residues over residues 1032 to 1067 and 1086 to 1097; these read ANVNTWNLVSPDSPRSTDSNSEIVSFGSPCSINSRQ and SFTNFFQNKPND. A Phosphoserine modification is found at S1044.

It belongs to the type I cytokine receptor family. Type 2 subfamily. In terms of assembly, heterodimer composed of LIFR and IL6ST. The heterodimer formed by LIFR and IL6ST interacts with the complex formed by CNTF and CNTFR.

The protein resides in the cell membrane. Its function is as follows. Signal-transducing molecule. May have a common pathway with IL6ST. The soluble form inhibits the biological activity of LIF by blocking its binding to receptors on target cells. In Canis lupus familiaris (Dog), this protein is Leukemia inhibitory factor receptor (LIFR).